A 338-amino-acid polypeptide reads, in one-letter code: MTTLRLLISDSYDPWFNLAVEECIFRQMPATQRVLFLWRNADTVVIGRAQNPWKECNTRRMEEDNVRLARRSSGGGAVFHDLGNTCFTFMAGKPEYDKTISTHIVLAALNSLGVMADASGRNDLVVKTPDGDRKVSGSAYRETKDRGFHHGTLLLNADLSRLANYLNPDKKKLAAKGITSVRSRVANLTKLLPGITHEQVCQAVTEAFFAHYGERVDAEVISPDKTPDLPNFAETFARQSSWEWNFGQAPAFSHLLDERFTWGGVELHFDVEKGVITRAQVFTDSLNPAPLEALAERLQGCLYRADMLQQACEALLVDFPEQEKELRELSAWIAGAVR.

The BPL/LPL catalytic domain occupies 29-216 (PATQRVLFLW…AFFAHYGERV (188 aa)). Residues arginine 71, 76–79 (GAVF), and lysine 134 each bind ATP. A (R)-lipoate-binding site is contributed by lysine 134.

It belongs to the LplA family. In terms of assembly, monomer.

The protein localises to the cytoplasm. It carries out the reaction L-lysyl-[lipoyl-carrier protein] + (R)-lipoate + ATP = N(6)-[(R)-lipoyl]-L-lysyl-[lipoyl-carrier protein] + AMP + diphosphate + H(+). It participates in protein modification; protein lipoylation via exogenous pathway; protein N(6)-(lipoyl)lysine from lipoate: step 1/2. It functions in the pathway protein modification; protein lipoylation via exogenous pathway; protein N(6)-(lipoyl)lysine from lipoate: step 2/2. Functionally, catalyzes both the ATP-dependent activation of exogenously supplied lipoate to lipoyl-AMP and the transfer of the activated lipoyl onto the lipoyl domains of lipoate-dependent enzymes. In Salmonella agona (strain SL483), this protein is Lipoate-protein ligase A.